Consider the following 306-residue polypeptide: tRNA dimethylallyltransferase (306 aa).

Residue Gly15–Ser22 participates in ATP binding. Thr17 to Ser22 contributes to the substrate binding site. An interaction with substrate tRNA region spans residues Asp40–Gln43.

It belongs to the IPP transferase family. Monomer. Requires Mg(2+) as cofactor.

It carries out the reaction adenosine(37) in tRNA + dimethylallyl diphosphate = N(6)-dimethylallyladenosine(37) in tRNA + diphosphate. Functionally, catalyzes the transfer of a dimethylallyl group onto the adenine at position 37 in tRNAs that read codons beginning with uridine, leading to the formation of N6-(dimethylallyl)adenosine (i(6)A). The protein is tRNA dimethylallyltransferase of Methylobacterium sp. (strain 4-46).